A 425-amino-acid polypeptide reads, in one-letter code: Serine--tRNA ligase (425 aa).

Residue 229 to 231 (TSE) coordinates L-serine. Residues 259–261 (RKE) and Val-275 contribute to the ATP site. Residue Glu-282 coordinates L-serine. 349–352 (EVTS) serves as a coordination point for ATP. Position 384 (Thr-384) interacts with L-serine.

This sequence belongs to the class-II aminoacyl-tRNA synthetase family. Type-1 seryl-tRNA synthetase subfamily. Homodimer. The tRNA molecule binds across the dimer.

The protein resides in the cytoplasm. The catalysed reaction is tRNA(Ser) + L-serine + ATP = L-seryl-tRNA(Ser) + AMP + diphosphate + H(+). The enzyme catalyses tRNA(Sec) + L-serine + ATP = L-seryl-tRNA(Sec) + AMP + diphosphate + H(+). The protein operates within aminoacyl-tRNA biosynthesis; selenocysteinyl-tRNA(Sec) biosynthesis; L-seryl-tRNA(Sec) from L-serine and tRNA(Sec): step 1/1. Its function is as follows. Catalyzes the attachment of serine to tRNA(Ser). Is also able to aminoacylate tRNA(Sec) with serine, to form the misacylated tRNA L-seryl-tRNA(Sec), which will be further converted into selenocysteinyl-tRNA(Sec). The polypeptide is Serine--tRNA ligase (Borrelia garinii subsp. bavariensis (strain ATCC BAA-2496 / DSM 23469 / PBi) (Borreliella bavariensis)).